The sequence spans 52 residues: Large ribosomal subunit protein bL33 (52 aa).

Belongs to the bacterial ribosomal protein bL33 family.

The polypeptide is Large ribosomal subunit protein bL33 (Chlamydia trachomatis serovar L2 (strain ATCC VR-902B / DSM 19102 / 434/Bu)).